The primary structure comprises 430 residues: Histidine--tRNA ligase (430 aa).

This sequence belongs to the class-II aminoacyl-tRNA synthetase family. In terms of assembly, homodimer.

The protein resides in the cytoplasm. The catalysed reaction is tRNA(His) + L-histidine + ATP = L-histidyl-tRNA(His) + AMP + diphosphate + H(+). The sequence is that of Histidine--tRNA ligase (hisS) from Clostridium acetobutylicum (strain ATCC 824 / DSM 792 / JCM 1419 / IAM 19013 / LMG 5710 / NBRC 13948 / NRRL B-527 / VKM B-1787 / 2291 / W).